Consider the following 305-residue polypeptide: Fatty acid elongase 1 (305 aa).

The next 7 helical transmembrane spans lie at 24–44 (MIANVDVVLYISFLYLGFVFI), 80–100 (VVWNLALSIFSIFGTSTVTPV), 129–149 (FWMGIFALSKIPELVDTIFLV), 158–178 (FLHWYHHVTVLLFSWHTYCVG), 183–203 (IWVAAMNYSVHSVMYLYFALA), 217–237 (YITIIQILQMVVGCYVTIFAL), and 257–277 (IQLVMYASYLYLFSKMFVASY). The HxxHH motif signature appears at 160-164 (HWYHH). Residue histidine 163 is the Nucleophile of the active site. The tract at residues 284-305 (PTVGGPSSTAGVSNGSVEKKVK) is disordered. A compositionally biased stretch (polar residues) spans 288–299 (GPSSTAGVSNGS). Residue asparagine 297 is glycosylated (N-linked (GlcNAc...) asparagine).

Belongs to the ELO family.

It localises to the endoplasmic reticulum membrane. It carries out the reaction an acyl-CoA + malonyl-CoA + H(+) = a 3-oxoacyl-CoA + CO2 + CoA. It functions in the pathway lipid metabolism; fatty acid biosynthesis. Involved in the synthesis of fatty acids. Elongates C4 fatty acids to C10. In Trypanosoma brucei brucei (strain 927/4 GUTat10.1), this protein is Fatty acid elongase 1.